The following is a 425-amino-acid chain: UPF0229 protein ETA_15540 (425 aa).

The tract at residues 60–111 is disordered; the sequence is NEPSFHQGRGGERYRVHPGNDHFVQNDRVDRPQGGGAGGSGQGNAGKDGEGQ. The segment covering 68–90 has biased composition (basic and acidic residues); sequence RGGERYRVHPGNDHFVQNDRVDR. A compositionally biased stretch (gly residues) spans 92–105; sequence QGGGAGGSGQGNAG.

It belongs to the UPF0229 family.

This chain is UPF0229 protein ETA_15540, found in Erwinia tasmaniensis (strain DSM 17950 / CFBP 7177 / CIP 109463 / NCPPB 4357 / Et1/99).